The sequence spans 397 residues: Putative teichuronic acid biosynthesis glycosyltransferase TuaH (397 aa).

This sequence belongs to the glycosyltransferase group 1 family.

The protein operates within cell wall biogenesis; teichuronic acid biosynthesis. This is Putative teichuronic acid biosynthesis glycosyltransferase TuaH (tuaH) from Bacillus subtilis (strain 168).